Consider the following 423-residue polypeptide: Testican-2 (423 aa).

Positions Met1 to Ala22 are cleaved as a signal peptide. Ser72 carries the phosphoserine modification. 5 disulfides stabilise this stretch: Cys90-Cys101, Cys95-Cys111, Cys136-Cys166, Cys139-Cys159, and Cys148-Cys180. The 53-residue stretch at Gly130–Cys182 folds into the Kazal-like domain. N-linked (GlcNAc...) asparagine glycosylation is present at Asn225. Residues Lys309–Cys375 enclose the Thyroglobulin type-1 domain. Intrachain disulfides connect Cys312-Cys336, Cys347-Cys354, and Cys356-Cys375. Residues Ser382 and Ser387 are each glycosylated (O-linked (Xyl...) (glycosaminoglycan) serine). The segment at Ser387–Trp423 is disordered. Acidic residues predominate over residues Trp391–Trp423.

O-glycosylated; contains chondroitin sulfate and heparan sulfate. As to expression, brain specific.

It is found in the secreted. The protein localises to the extracellular space. Its subcellular location is the extracellular matrix. Its function is as follows. May participate in diverse steps of neurogenesis. Binds calcium. The protein is Testican-2 (Spock2) of Mus musculus (Mouse).